We begin with the raw amino-acid sequence, 307 residues long: Ornithine carbamoyltransferase (307 aa).

Carbamoyl phosphate-binding positions include 56–59 (STRT), Q83, R107, and 134–137 (HPCQ). Residues N165, D223, and 227 to 228 (SM) each bind L-ornithine. Carbamoyl phosphate is bound by residues 263-264 (CL) and R291.

The protein belongs to the aspartate/ornithine carbamoyltransferase superfamily. OTCase family.

The protein localises to the cytoplasm. The enzyme catalyses carbamoyl phosphate + L-ornithine = L-citrulline + phosphate + H(+). Its pathway is amino-acid biosynthesis; L-arginine biosynthesis; L-arginine from L-ornithine and carbamoyl phosphate: step 1/3. Functionally, reversibly catalyzes the transfer of the carbamoyl group from carbamoyl phosphate (CP) to the N(epsilon) atom of ornithine (ORN) to produce L-citrulline. This is Ornithine carbamoyltransferase from Cupriavidus pinatubonensis (strain JMP 134 / LMG 1197) (Cupriavidus necator (strain JMP 134)).